A 180-amino-acid polypeptide reads, in one-letter code: Translation initiation factor IF-3 (180 aa).

It belongs to the IF-3 family. As to quaternary structure, monomer.

The protein localises to the cytoplasm. In terms of biological role, IF-3 binds to the 30S ribosomal subunit and shifts the equilibrium between 70S ribosomes and their 50S and 30S subunits in favor of the free subunits, thus enhancing the availability of 30S subunits on which protein synthesis initiation begins. The sequence is that of Translation initiation factor IF-3 from Hyphomonas neptunium (strain ATCC 15444).